A 406-amino-acid chain; its full sequence is Arginine deiminase (406 aa).

Residue Cys-396 is the Amidino-cysteine intermediate of the active site.

The protein belongs to the arginine deiminase family.

Its subcellular location is the cytoplasm. It catalyses the reaction L-arginine + H2O = L-citrulline + NH4(+). Its pathway is amino-acid degradation; L-arginine degradation via ADI pathway; carbamoyl phosphate from L-arginine: step 1/2. This Aliivibrio fischeri (strain MJ11) (Vibrio fischeri) protein is Arginine deiminase.